The sequence spans 275 residues: Lectin (275 aa).

The first 30 residues, 1–30 (MASLQTQMISFYLIFLSILLTTIFFFKVNS), serve as a signal peptide directing secretion. Asp111 and Gly129 together coordinate D-glucose. Positions 149 and 151 each coordinate Mn(2+). 4 residues coordinate Ca(2+): Asp151, Phe153, Asn155, and Asp159. Mn(2+)-binding residues include Asp159 and His166. The propeptide occupies 211-217 (NSLEEEN). Gly246 and Ala247 together coordinate D-glucose. A propeptide spanning residues 270–275 (KQAADA) is cleaved from the precursor.

The protein belongs to the leguminous lectin family. As to quaternary structure, heterotetramer of two alpha and two beta chains. In terms of processing, the mature form consists of two chains, alpha and beta, produced by cleavage of the immature protein. These remain cleaved, yet fold together to form one subunit.

In terms of biological role, D-mannose specific lectin. This is Lectin from Lens culinaris subsp. culinaris (Cultivated lentil).